A 57-amino-acid chain; its full sequence is UPF0391 membrane protein IL0696 (57 aa).

The next 2 helical transmembrane spans lie at 4–24 (WVLI…GGIA) and 28–48 (AGIA…SLVV).

The protein belongs to the UPF0391 family.

The protein resides in the cell membrane. The chain is UPF0391 membrane protein IL0696 from Idiomarina loihiensis (strain ATCC BAA-735 / DSM 15497 / L2-TR).